Here is a 180-residue protein sequence, read N- to C-terminus: ATP synthase subunit delta (180 aa).

This sequence belongs to the ATPase delta chain family. In terms of assembly, F-type ATPases have 2 components, F(1) - the catalytic core - and F(0) - the membrane proton channel. F(1) has five subunits: alpha(3), beta(3), gamma(1), delta(1), epsilon(1). F(0) has three main subunits: a(1), b(2) and c(10-14). The alpha and beta chains form an alternating ring which encloses part of the gamma chain. F(1) is attached to F(0) by a central stalk formed by the gamma and epsilon chains, while a peripheral stalk is formed by the delta and b chains.

The protein resides in the cell membrane. F(1)F(0) ATP synthase produces ATP from ADP in the presence of a proton or sodium gradient. F-type ATPases consist of two structural domains, F(1) containing the extramembraneous catalytic core and F(0) containing the membrane proton channel, linked together by a central stalk and a peripheral stalk. During catalysis, ATP synthesis in the catalytic domain of F(1) is coupled via a rotary mechanism of the central stalk subunits to proton translocation. Its function is as follows. This protein is part of the stalk that links CF(0) to CF(1). It either transmits conformational changes from CF(0) to CF(1) or is implicated in proton conduction. This chain is ATP synthase subunit delta, found in Caldicellulosiruptor bescii (strain ATCC BAA-1888 / DSM 6725 / KCTC 15123 / Z-1320) (Anaerocellum thermophilum).